The following is a 1703-amino-acid chain: Arf-GAP with Rho-GAP domain, ANK repeat and PH domain-containing protein 2 (1703 aa).

The 65-residue stretch at 6–70 folds into the SAM domain; it reads EVNADIRDFL…LKQLQMIFSK (65 aa). Position 77 is a phosphotyrosine (Tyr-77). Disordered stretches follow at residues 84–132, 191–232, and 286–319; these read KNGS…LSEG, EEHT…NGTN, and PVPE…LTLK. Polar residues-rich tracts occupy residues 85-103, 123-132, and 197-214; these read NGST…STHT, MVTTSTLSEG, and GNLT…NTEC. A compositionally biased stretch (low complexity) spans 222–232; sequence TSGTHSGNGTN. The span at 308 to 319 shows a compositional bias: polar residues; sequence NTTSAGKSLTLK. 2 PH domains span residues 480-572 and 585-677; these read AKEK…SALK and APEK…QSIA. In terms of domain architecture, Arf-GAP spans 674 to 809; it reads QSIAETLSDY…TLLASLTKEE (136 aa). The C4-type zinc finger occupies 698 to 721; sequence CADCKAPDPDWASINLCVVICKKC. 2 consecutive PH domains span residues 899-1001 and 1012-1110; these read QTAA…KRFV and DYDL…KAAG. The 182-residue stretch at 1114–1295 folds into the Rho-GAP domain; it reads NALQDQQLCK…DLINNYVEIF (182 aa). A Ras-associating domain is found at 1324–1418; the sequence is GDLLIEVFVE…AYLVVKRFLT (95 aa). The 104-residue stretch at 1428 to 1531 folds into the PH 5 domain; that stretch reads KSIKEGILKL…WMASIFIAQH (104 aa). Position 1627 is a phosphoserine (Ser-1627). Disordered regions lie at residues 1633–1670 and 1684–1703; these read DTEA…DPKL and RSRP…KEVK. Composition is skewed to basic and acidic residues over residues 1653–1670 and 1688–1703; these read KKTE…DPKL and LHKE…KEVK.

It is found in the cytoplasm. Functionally, phosphatidylinositol 3,4,5-trisphosphate-dependent GTPase-activating protein that modulates actin cytoskeleton remodeling by regulating ARF and RHO family members. Is activated by phosphatidylinositol 3,4,5-trisphosphate (PtdIns(3,4,5)P3) binding. Can be activated by phosphatidylinositol 3,4-bisphosphate (PtdIns(3,4,5)P2) binding, albeit with lower efficiency. The polypeptide is Arf-GAP with Rho-GAP domain, ANK repeat and PH domain-containing protein 2 (Arap2) (Mus musculus (Mouse)).